Here is a 187-residue protein sequence, read N- to C-terminus: Small ribosomal subunit protein uS10m (187 aa).

Belongs to the universal ribosomal protein uS10 family. In terms of assembly, component of the mitochondrial ribosome small subunit (28S) which comprises a 12S rRNA and about 30 distinct proteins.

The protein resides in the mitochondrion. This Danio rerio (Zebrafish) protein is Small ribosomal subunit protein uS10m (mrps10).